Reading from the N-terminus, the 1038-residue chain is MNNGKVRIYELSKELNLDNKELLAICDQLNIAVKSHSSTISESEAESIRAAAEKLAATNGTSKKELNTTSHKPNSAPAGSRNRPAPPQKQQQILEIRKPKILRNTTSNAPEASVANNQIASSEANSPAPPRPFATPVSPMKPTAPSRPVPRNLSETPQKPAAPEAEPEAQSQAPAKIAVEKPEKSAQPRPGKPERQPKPQLVAPPSRPTAEKLDLSEITGAPGEKPILKRDRPRREDERDQAKPRVAKPAQGETSSAPVQKQARPAQGPVKPEQRVNRPGAPSGDGIRPQRPVRPSVDAAPVATPPRGVPGGRGEVGDTAAIAPDLLDLKRPTPPRLAKGGKKWQEEEIIDEIKEKAGKAGVKGKRVKPLVEDDFEDEDLLDEEGLEIPATVQVSLSIARPPKPKAARAATAATAAPISSPTTRGKRSSHNNRDQNRRQETEVKRERPEKVAVTGPMTVQELADLLAVADTEIVKILFMKGMAVSITQNLDIPTITLVGKELEIEVETAEPEAEARKVTEMIEVGDLEHLLRRPPVVTIMGHVDHGKTTLLDSIRKTKVAAGEAGGITQHIGAYHVDIVHDGKEQQIVFLDTPGHEAFTAMRARGARVTDIAVLVVAADDGVRPQTVEAISHAQAAGVPIVVAINKIDKEGAQPDRVKQELTQYGLTPEEWGGETIMVPVSAIKGENLDTLLEMILLVAEVGELSANPDRNARGTVIEAHLDKAKGAVATLLIQNGTLHVGDILLAGSAFGKVRAMVDDRGRRVDIAGPSFAVEVLGLSDVPAAGDEFEVFDNEKEARALASDRADKQRLSRLLQGRVTLTTLSAQAQEGELKELNLILKGDVQGSVEAIVGSLKQIPQNEVQIRMLLTAAGEITETDIDLAAASGAVIIGFNTTFASGARQAADEAGVDVREYNIIYKLIEDIQGALEGLLEPELVEEPLGQTEVRAVFPVGRGAVAGCYVQSGKLVRNCKVRVRRAGKVIYEGVLDSLKRMKDDAREVNAGYECGIGVDKFHDWAEGDIIESYQMVTKRRTLALTR.

2 disordered regions span residues 39 to 346 (TISE…KWQE) and 403 to 451 (KPKA…PEKV). Polar residues predominate over residues 103–125 (RNTTSNAPEASVANNQIASSEAN). Residues 157–176 (PQKPAAPEAEPEAQSQAPAK) are compositionally biased toward low complexity. 2 stretches are compositionally biased toward basic and acidic residues: residues 178 to 197 (AVEK…ERQP) and 226 to 243 (PILK…DQAK). Over residues 407–423 (ARAATAATAAPISSPTT) the composition is skewed to low complexity. Positions 431 to 450 (NNRDQNRRQETEVKRERPEK) are enriched in basic and acidic residues. Residues 532 to 705 (RRPPVVTIMG…LLVAEVGELS (174 aa)) enclose the tr-type G domain. A G1 region spans residues 541-548 (GHVDHGKT). Position 541–548 (541–548 (GHVDHGKT)) interacts with GTP. Residues 566–570 (GITQH) are G2. Residues 591–594 (DTPG) form a G3 region. GTP contacts are provided by residues 591 to 595 (DTPGH) and 645 to 648 (NKID). Positions 645 to 648 (NKID) are G4. A G5 region spans residues 681–683 (SAI).

Belongs to the TRAFAC class translation factor GTPase superfamily. Classic translation factor GTPase family. IF-2 subfamily.

The protein resides in the cytoplasm. In terms of biological role, one of the essential components for the initiation of protein synthesis. Protects formylmethionyl-tRNA from spontaneous hydrolysis and promotes its binding to the 30S ribosomal subunits. Also involved in the hydrolysis of GTP during the formation of the 70S ribosomal complex. This is Translation initiation factor IF-2 from Trichormus variabilis (strain ATCC 29413 / PCC 7937) (Anabaena variabilis).